Reading from the N-terminus, the 604-residue chain is MKQDSRNLYLAIGLSLLVLIGWNYFFAGPQVEKARQAQIVREQQAQTQTTSDTTARSDLNVPGQRSLPGESPQTQLSRPEALAASPRVKLDTPNLFGSINLRGARIDDVSLKAYRETVAKDSPNIVLLSPSGTPAPYYADAGFVAPAEAGLLLPKSDTLWSADREVLTPEAPVTLTYDNGQGLIFHRTISVDDRFMFTLTDKVENKTDKPVTLYPYSLVSRHGRPVTAGYAVLHEGMVGVIGDNGLQEITYDKIHKEENATKSFKGTGGWLGFTDKYWAAVIAPDQATPFEGRFSERGTTTPLYQTDALGPALTIAPGGTGGDMSRLFAGAKETQTLDDYRNELGIKKFDLLIDWGYFYFITRPMFWILHTIYQVVGNFGVAILCITVLVKAVFFPLANRSYLSMAKMKAIQPQMLALRERYADDKVKQQQELMELYKREKINPVAGCLPMLIQIPVFFALYKVLFVTIEMRQAPFFGWIRDLSAPDPTNIFNLFGLLPFDPTHLPMIGHFLAIGIWPLIMGVSMFFQMKMNPEPADPVQKQMFSWMPVIFTFMLGTFPSGLVIYWTWNNTLSVLQQSLIMKRAGVKVELWDNLMSTFRKKAVT.

The helical transmembrane segment at 8–28 (LYLAIGLSLLVLIGWNYFFAG) threads the bilayer. The tract at residues 42–84 (EQQAQTQTTSDTTARSDLNVPGQRSLPGESPQTQLSRPEALAA) is disordered. Over residues 43–58 (QQAQTQTTSDTTARSD) the composition is skewed to low complexity. 5 helical membrane passes run 349–369 (FDLL…FWIL), 375–395 (VVGN…AVFF), 449–469 (LPML…FVTI), 507–527 (MIGH…SMFF), and 546–566 (WMPV…VIYW).

The protein belongs to the OXA1/ALB3/YidC family. Type 1 subfamily. As to quaternary structure, interacts with the Sec translocase complex via SecD. Specifically interacts with transmembrane segments of nascent integral membrane proteins during membrane integration.

It localises to the cell inner membrane. Required for the insertion and/or proper folding and/or complex formation of integral membrane proteins into the membrane. Involved in integration of membrane proteins that insert both dependently and independently of the Sec translocase complex, as well as at least some lipoproteins. Aids folding of multispanning membrane proteins. The chain is Membrane protein insertase YidC from Beijerinckia indica subsp. indica (strain ATCC 9039 / DSM 1715 / NCIMB 8712).